A 154-amino-acid chain; its full sequence is Small ribosomal subunit protein uS7c (154 aa).

This sequence belongs to the universal ribosomal protein uS7 family. As to quaternary structure, part of the 30S ribosomal subunit.

Its subcellular location is the plastid. It is found in the chloroplast. In terms of biological role, one of the primary rRNA binding proteins, it binds directly to 16S rRNA where it nucleates assembly of the head domain of the 30S subunit. This Pleurastrum terricola (Filamentous green alga) protein is Small ribosomal subunit protein uS7c (rps7).